A 925-amino-acid chain; its full sequence is Probable dipeptidyl-aminopeptidase B (925 aa).

Residues 1 to 104 form a disordered region; sequence MTPYRDVPPV…RHAQKKGPGM (104 aa). At 1 to 110 the chain is on the cytoplasmic side; that stretch reads MTPYRDVPPV…GPGMDRGMRR (110 aa). Positions 31–40 are enriched in low complexity; that stretch reads ESGSSVSTTS. Basic and acidic residues predominate over residues 55–72; the sequence is LSEKQPRGDDNEDALKDE. A helical; Signal-anchor for type II membrane protein membrane pass occupies residues 111 to 131; it reads ALLIAAGLLVSAWVAGLFVYI. The Vacuolar portion of the chain corresponds to 132-925; it reads ATKSYKPASA…PKPNGKRRAA (794 aa). A glycan (N-linked (GlcNAc...) asparagine) is linked at Asn369. The active-site Charge relay system is Ser773. N-linked (GlcNAc...) asparagine glycosylation occurs at Asn832. Catalysis depends on charge relay system residues Asp850 and His883.

It belongs to the peptidase S9B family.

It is found in the vacuole membrane. The catalysed reaction is Release of an N-terminal dipeptide, Xaa-Yaa-|-Zaa-, from a polypeptide, preferentially when Yaa is Pro, provided Zaa is neither Pro nor hydroxyproline.. Type IV dipeptidyl-peptidase which removes N-terminal dipeptides sequentially from polypeptides having unsubstituted N-termini provided that the penultimate residue is proline. This is Probable dipeptidyl-aminopeptidase B (DAPB) from Chaetomium globosum (strain ATCC 6205 / CBS 148.51 / DSM 1962 / NBRC 6347 / NRRL 1970) (Soil fungus).